The chain runs to 415 residues: tRNA (cytosine(38)-C(5))-methyltransferase (415 aa).

One can recognise an SAM-dependent MTase C5-type domain in the interval 4-396 (LRVLELYSGI…TVLCEGFGNA (393 aa)). Residues 13 to 15 (IGG), Asp34, 57 to 58 (IE), and Ser76 contribute to the S-adenosyl-L-methionine site. Cys79 is an active-site residue. Ser376 serves as a coordination point for S-adenosyl-L-methionine.

Belongs to the class I-like SAM-binding methyltransferase superfamily. C5-methyltransferase family. Highly expressed in thymus, testis, and at much lower levels in spleen, lung, brain, heart, kidney, liver, skeletal muscle and embryonic stem cells.

Its subcellular location is the cytoplasm. The enzyme catalyses cytidine(38) in tRNA + S-adenosyl-L-methionine = 5-methylcytidine(38) in tRNA + S-adenosyl-L-homocysteine + H(+). Functionally, specifically methylates cytosine 38 in the anticodon loop of tRNA(Asp). Has higher activity on tRNA(Asp) modified with queuosine at position 34. This chain is tRNA (cytosine(38)-C(5))-methyltransferase (Trdmt1), found in Mus musculus (Mouse).